Reading from the N-terminus, the 101-residue chain is UPF0473 protein spr0177 (101 aa).

It belongs to the UPF0473 family.

The polypeptide is UPF0473 protein spr0177 (Streptococcus pneumoniae (strain ATCC BAA-255 / R6)).